Consider the following 139-residue polypeptide: MLIPRRVKHRKQHHPKRRGQAKGGTQVSFGEYGIQALTPAYVTNRQIEAARIAMTRHIKRGGKVWINIYPDRPLTKKPAETRMGSGKGSPEWWIANVHPGRVMFELSYPNEKIAREALTRAAHKLPMKCRIVKREAGEA.

Over residues 1 to 20 the composition is skewed to basic residues; sequence MLIPRRVKHRKQHHPKRRGQ. The disordered stretch occupies residues 1-25; sequence MLIPRRVKHRKQHHPKRRGQAKGGT.

Belongs to the universal ribosomal protein uL16 family. As to quaternary structure, part of the 50S ribosomal subunit.

Functionally, binds 23S rRNA and is also seen to make contacts with the A and possibly P site tRNAs. The protein is Large ribosomal subunit protein uL16 of Streptomyces avermitilis (strain ATCC 31267 / DSM 46492 / JCM 5070 / NBRC 14893 / NCIMB 12804 / NRRL 8165 / MA-4680).